Here is a 201-residue protein sequence, read N- to C-terminus: dITP/XTP pyrophosphatase (201 aa).

7–12 (SNNAHK) provides a ligand contact to substrate. Asp72 acts as the Proton acceptor in catalysis. Asp72 is a Mg(2+) binding site. Substrate contacts are provided by residues Ser73, 154–157 (FGYD), Lys177, and 182–183 (HR).

This sequence belongs to the HAM1 NTPase family. In terms of assembly, homodimer. Mg(2+) serves as cofactor.

The enzyme catalyses XTP + H2O = XMP + diphosphate + H(+). It carries out the reaction dITP + H2O = dIMP + diphosphate + H(+). The catalysed reaction is ITP + H2O = IMP + diphosphate + H(+). Functionally, pyrophosphatase that catalyzes the hydrolysis of nucleoside triphosphates to their monophosphate derivatives, with a high preference for the non-canonical purine nucleotides XTP (xanthosine triphosphate), dITP (deoxyinosine triphosphate) and ITP. Seems to function as a house-cleaning enzyme that removes non-canonical purine nucleotides from the nucleotide pool, thus preventing their incorporation into DNA/RNA and avoiding chromosomal lesions. The sequence is that of dITP/XTP pyrophosphatase from Leuconostoc mesenteroides subsp. mesenteroides (strain ATCC 8293 / DSM 20343 / BCRC 11652 / CCM 1803 / JCM 6124 / NCDO 523 / NBRC 100496 / NCIMB 8023 / NCTC 12954 / NRRL B-1118 / 37Y).